A 583-amino-acid polypeptide reads, in one-letter code: MTGWYEFPVMIGFVSAAVFLLISVAYLPLLNDLYWSTLKSLTPPAGIVADLLVTNGTIFTSDSSLPFADSMAIRNGRILKVGSFATLKGFIGDGTMEVNLEGKIVVPGLIDSHVHLISGGLQMAQVGLRGVSQKDEFCKMVKDAVQNAKEGSWILGGGWNNDFWGGELPSASWIDEISPRNPVWLIRMDGHMALANSLALKIAGVISLTEDPVGGTIMRMPSGEPTGLLIDAAMELVTPWVKEISVDERREALFRASKYALTRGVTTVIDLGRYFPGTTDELSWKDFQDVYLYADSSKKMMIRTCLFFPITTWSRLLDLKLQKGSVLSEWLYLGGVKAFIDGSLGSNSALFYEEYIDTPNNYGLEVMDPEKLSNFTMAADKSGLQVAIHAIGDKANDMILDMYESVAAANGDRDRRFRIEHAQHLAPGSANRFGQLHIVASVQPDHLLDDADSVAKKLGSERAVKESYLFQSLLNGNALLALGSDWPVADINPLHSIRTAVKRIPPKWDHAWIPSERISFTDALIAQTISAARAAFLDHHLGSLSPGKLADFVILSTNSWDEFSKDVSASVLATYVGGKQLYP.

The helical transmembrane segment at 7–27 (FPVMIGFVSAAVFLLISVAYL) threads the bilayer. 2 N-linked (GlcNAc...) asparagine glycosylation sites follow: N55 and N374.

This sequence belongs to the metallo-dependent hydrolases superfamily. In terms of tissue distribution, expressed at low level in seedlings, roots, leaves, stems, flowers, and siliques.

It is found in the membrane. The protein localises to the cytoplasm. It localises to the perinuclear region. Required for phyA-controlled responses to continuous far-red light (FRc) conditions, including the inhibition of hypocotyl elongation and the regulation of XTH15/XTR7 expression. This is Protein LONG AFTER FAR-RED 3 from Arabidopsis thaliana (Mouse-ear cress).